A 1429-amino-acid chain; its full sequence is DNA-directed RNA polymerase subunit beta' (1429 aa).

Residues Cys-68, Cys-70, Cys-83, and Cys-86 each contribute to the Zn(2+) site. The Mg(2+) site is built by Asp-459, Asp-461, and Asp-463. Zn(2+) contacts are provided by Cys-805, Cys-879, Cys-886, and Cys-889. A disordered region spans residues Glu-1407–Glu-1429. Positions Ala-1419–Glu-1429 are enriched in polar residues.

Belongs to the RNA polymerase beta' chain family. The RNAP catalytic core consists of 2 alpha, 1 beta, 1 beta' and 1 omega subunit. When a sigma factor is associated with the core the holoenzyme is formed, which can initiate transcription. The cofactor is Mg(2+). Zn(2+) is required as a cofactor.

It carries out the reaction RNA(n) + a ribonucleoside 5'-triphosphate = RNA(n+1) + diphosphate. DNA-dependent RNA polymerase catalyzes the transcription of DNA into RNA using the four ribonucleoside triphosphates as substrates. This Rhodopirellula baltica (strain DSM 10527 / NCIMB 13988 / SH1) protein is DNA-directed RNA polymerase subunit beta'.